Here is a 173-residue protein sequence, read N- to C-terminus: Large ribosomal subunit protein uL18 (173 aa).

The protein belongs to the universal ribosomal protein uL18 family. As to quaternary structure, part of the 50S ribosomal subunit. Contacts the 5S and 23S rRNAs.

This is one of the proteins that bind and probably mediate the attachment of the 5S RNA into the large ribosomal subunit, where it forms part of the central protuberance. The polypeptide is Large ribosomal subunit protein uL18 (Methanococcoides burtonii (strain DSM 6242 / NBRC 107633 / OCM 468 / ACE-M)).